Reading from the N-terminus, the 354-residue chain is NADH-quinone oxidoreductase subunit H (354 aa).

Transmembrane regions (helical) follow at residues 25 to 45 (LVRI…LILW), 91 to 111 (WIYL…WAVI), 126 to 146 (LLYA…AGWA), 170 to 190 (MGFA…SGIV), 205 to 225 (FLSW…ISGI), 267 to 287 (IVIS…PFGF), 290 to 310 (FVPG…VFIW), and 330 to 350 (IFIP…MSPL).

It belongs to the complex I subunit 1 family. As to quaternary structure, NDH-1 is composed of 14 different subunits. Subunits NuoA, H, J, K, L, M, N constitute the membrane sector of the complex.

The protein localises to the cell inner membrane. The enzyme catalyses a quinone + NADH + 5 H(+)(in) = a quinol + NAD(+) + 4 H(+)(out). Functionally, NDH-1 shuttles electrons from NADH, via FMN and iron-sulfur (Fe-S) centers, to quinones in the respiratory chain. The immediate electron acceptor for the enzyme in this species is believed to be ubiquinone. Couples the redox reaction to proton translocation (for every two electrons transferred, four hydrogen ions are translocated across the cytoplasmic membrane), and thus conserves the redox energy in a proton gradient. This subunit may bind ubiquinone. This Paraburkholderia phytofirmans (strain DSM 17436 / LMG 22146 / PsJN) (Burkholderia phytofirmans) protein is NADH-quinone oxidoreductase subunit H.